The following is a 201-amino-acid chain: Recombination protein RecR (201 aa).

The segment at 59-74 adopts a C4-type zinc-finger fold; that stretch reads CEICGNMDTENMCRIC. The region spanning 82–177 is the Toprim domain; that stretch reads SIIAIVETVA…KISRLASGIP (96 aa).

It belongs to the RecR family.

Functionally, may play a role in DNA repair. It seems to be involved in an RecBC-independent recombinational process of DNA repair. It may act with RecF and RecO. The polypeptide is Recombination protein RecR (Rickettsia africae (strain ESF-5)).